The primary structure comprises 419 residues: Tyrosine--tRNA ligase (419 aa).

Tyr-42 lines the L-tyrosine pocket. A 'HIGH' region motif is present at residues 47-56; it reads ATAPSLHVGS. The L-tyrosine site is built by Tyr-179 and Gln-183. A 'KMSKS' region motif is present at residues 239–243; that stretch reads KMGKT. Residue Lys-242 participates in ATP binding. The S4 RNA-binding domain maps to 353–418; the sequence is VVLAALFADA…GKKKIVLVKP (66 aa).

The protein belongs to the class-I aminoacyl-tRNA synthetase family. TyrS type 1 subfamily. In terms of assembly, homodimer.

It is found in the cytoplasm. It carries out the reaction tRNA(Tyr) + L-tyrosine + ATP = L-tyrosyl-tRNA(Tyr) + AMP + diphosphate + H(+). Functionally, catalyzes the attachment of tyrosine to tRNA(Tyr) in a two-step reaction: tyrosine is first activated by ATP to form Tyr-AMP and then transferred to the acceptor end of tRNA(Tyr). The sequence is that of Tyrosine--tRNA ligase from Caulobacter vibrioides (strain ATCC 19089 / CIP 103742 / CB 15) (Caulobacter crescentus).